The following is a 632-amino-acid chain: PAN2-PAN3 deadenylation complex subunit PAN3 (632 aa).

Disordered stretches follow at residues 1–22 (MQPG…PHQL) and 99–127 (PTFG…PPTL). The span at 107–116 (MNHRASHHHQ) shows a compositional bias: basic residues. Positions 117–127 (SPQMAQQPPTL) are enriched in polar residues. The interval 223-494 (KADSAIIGDI…TINEIMPMIG (272 aa)) is pseudokinase domain. ATP contacts are provided by residues Arg-270, 321 to 328 (DYYPLAGT), and 397 to 398 (NK). Residues 495 to 533 (GRFFTVMENMQAKTDVLEAELSREMENGRLFRLVAKMNT) adopt a coiled-coil conformation. A knob domain region spans residues 534–632 (VLERVEHGTD…LLGTNMMLHR (99 aa)).

It belongs to the protein kinase superfamily. PAN3 family. Homodimer. Forms a heterotrimer with a catalytic subunit PAN2 to form the poly(A)-nuclease (PAN) deadenylation complex. Interacts (via PAM-2 motif) with poly(A)-binding protein (via PABC domain), conferring substrate specificity of the enzyme complex. Interacts with the GW182 family protein ain-1. As to expression, highly expressed in germ cells.

Its subcellular location is the cytoplasm. The protein localises to the P-body. Regulatory subunit of the poly(A)-nuclease (PAN) deadenylation complex, one of two cytoplasmic mRNA deadenylases involved in general and miRNA-mediated mRNA turnover. PAN specifically shortens poly(A) tails of RNA and the activity is stimulated by poly(A)-binding protein (PABP). PAN deadenylation is followed by rapid degradation of the shortened mRNA tails by the CCR4-NOT complex. Deadenylated mRNAs are then degraded by two alternative mechanisms, namely exosome-mediated 3'-5' exonucleolytic degradation, or deadenylation-dependent mRNA decaping and subsequent 5'-3' exonucleolytic degradation by XRN1. PAN3 acts as a positive regulator for PAN activity, recruiting the catalytic subunit PAN2 to mRNA via its interaction with RNA and PABP, and to miRNA targets via its interaction with GW182 family proteins. Within the PAN complex, may positively regulate fertility. The chain is PAN2-PAN3 deadenylation complex subunit PAN3 from Caenorhabditis elegans.